The primary structure comprises 107 residues: Nucleoid-associated protein A1E_05550 (107 aa).

Belongs to the YbaB/EbfC family. As to quaternary structure, homodimer.

Its subcellular location is the cytoplasm. The protein localises to the nucleoid. In terms of biological role, binds to DNA and alters its conformation. May be involved in regulation of gene expression, nucleoid organization and DNA protection. The chain is Nucleoid-associated protein A1E_05550 from Rickettsia canadensis (strain McKiel).